The sequence spans 1118 residues: cGMP-specific 3',5'-cyclic phosphodiesterase (1118 aa).

The tract at residues 1 to 142 is disordered; sequence MTDVSSPAGG…KASTTASQQD (142 aa). A compositionally biased stretch (low complexity) spans 18-33; it reads STTSSSSAATTSASSS. The segment covering 34–45 has biased composition (polar residues); that stretch reads KPLTNGANKTAI. Composition is skewed to low complexity over residues 46–56 and 63–72; these read STAAGGVTPGA and GAIPASSSSG. Positions 84–101 are enriched in polar residues; sequence SNNNRPAVTNRSSETKLM. Residues 102–128 show a composition bias toward low complexity; the sequence is TPTGSSSSPSQSPSQTQASIQTQTSQQ. 2 GAF domains span residues 247 to 399 and 431 to 612; these read DIDV…GIGI and NLEC…GLGI. One can recognise a PDEase domain in the interval 642–965; that stretch reads SQDQTEKLTQ…RNWQDLAEKV (324 aa). The Proton donor role is filled by histidine 718. 4 residues coordinate a divalent metal cation: histidine 722, histidine 758, aspartate 759, and aspartate 869. 2 disordered regions span residues 1006–1035 and 1065–1118; these read QQSQHGSEDSHTPEHQRSGSRLSMKKTGAL and SHVS…CALL. 2 stretches are compositionally biased toward basic and acidic residues: residues 1011 to 1022 and 1065 to 1075; these read GSEDSHTPEHQR and SHVSEDMDDKS. Low complexity predominate over residues 1084–1104; that stretch reads ASGSMGRMSASSSTSSAGGQM. The span at 1108–1118 shows a compositional bias: basic residues; the sequence is SKKRSKLCALL. Position 1115 is a cysteine methyl ester (cysteine 1115). Cysteine 1115 carries S-farnesyl cysteine lipidation. Residues 1116–1118 constitute a propeptide, removed in mature form; sequence ALL.

It belongs to the cyclic nucleotide phosphodiesterase family. Interacts with PrBP. Requires a divalent metal cation as cofactor. Expressed in Malpighian tubule principal cells. Also expressed in adult head.

It is found in the cell membrane. The enzyme catalyses 3',5'-cyclic GMP + H2O = GMP + H(+). Its activity is regulated as follows. Inhibited by sildenafil and zaprinast. Hydrolyzes the second messenger cGMP, which is a key regulator of many important physiological processes. Has cAMP phosphodiesterase activity in vitro but not in vivo. Has a role regulating cGMP transport in Malpighian tubule principal cells. The polypeptide is cGMP-specific 3',5'-cyclic phosphodiesterase (Pde6) (Drosophila melanogaster (Fruit fly)).